The following is a 402-amino-acid chain: Plasminogen activator inhibitor 1 (402 aa).

The first 23 residues, 1-23 (MRMSPVFACLALGLALIFGEGSA), serve as a signal peptide directing secretion. N-linked (GlcNAc...) asparagine glycans are attached at residues Asn-232, Asn-288, and Asn-352.

This sequence belongs to the serpin family. In terms of assembly, forms a heterodimer with TMPRSS7. Interacts with VTN. Binds LRP1B; binding is followed by internalization and degradation. Interacts with PPP1CB. In complex with PLAU/uPA, interacts with PLAUR/uPAR. Interacts with SORL1 and LRP1, either alone or in complex with PLAU; these interactions are abolished in the presence of LRPAP1/RAP. The ternary complex composed of PLAUR-PLAU-PAI1 also interacts with SORL1. Interacts with PLAT/tPA. Also interacts with SORL1, when complexed to PLAT/tPA. In terms of tissue distribution, vascular endothelial cells may be the primary site of synthesis of plasma PAI1.

It localises to the secreted. In terms of biological role, serine protease inhibitor. Inhibits TMPRSS7. Is a primary inhibitor of tissue-type plasminogen activator (PLAT) and urokinase-type plasminogen activator (PLAU). As PLAT inhibitor, it is required for fibrinolysis down-regulation and is responsible for the controlled degradation of blood clots. As PLAU inhibitor, it is involved in the regulation of cell adhesion and spreading. Acts as a regulator of cell migration, independently of its role as protease inhibitor. It is required for stimulation of keratinocyte migration during cutaneous injury repair. It is involved in cellular and replicative senescence. Plays a role in alveolar type 2 cells senescence in the lung. Is involved in the regulation of cementogenic differentiation of periodontal ligament stem cells, and regulates odontoblast differentiation and dentin formation during odontogenesis. The protein is Plasminogen activator inhibitor 1 (SERPINE1) of Bos taurus (Bovine).